The following is a 138-amino-acid chain: Acidic phospholipase A2 CH-E6' (138 aa).

Residues 1 to 16 form the signal peptide; it reads MRTLWIVAVLLLGVEG. Cystine bridges form between C42–C131, C44–C60, C59–C111, C65–C138, C66–C104, C73–C97, and C91–C102. Residues Y43, G45, and G47 each coordinate Ca(2+). H63 is an active-site residue. D64 contributes to the Ca(2+) binding site. D105 is a catalytic residue.

It belongs to the phospholipase A2 family. Group II subfamily. D49 sub-subfamily. The cofactor is Ca(2+). As to expression, expressed by the venom gland.

It is found in the secreted. The enzyme catalyses a 1,2-diacyl-sn-glycero-3-phosphocholine + H2O = a 1-acyl-sn-glycero-3-phosphocholine + a fatty acid + H(+). Snake venom phospholipase A2 (PLA2) that shows high lipolytic and weak ADP-induced platelet aggregation activities. Also shows weak anticoagulant activity. PLA2 catalyzes the calcium-dependent hydrolysis of the 2-acyl groups in 3-sn-phosphoglycerides. The chain is Acidic phospholipase A2 CH-E6' from Crotalus horridus (Timber rattlesnake).